The following is a 92-amino-acid chain: Small ribosomal subunit protein uS17 (92 aa).

The protein belongs to the universal ribosomal protein uS17 family. Part of the 30S ribosomal subunit.

One of the primary rRNA binding proteins, it binds specifically to the 5'-end of 16S ribosomal RNA. This is Small ribosomal subunit protein uS17 from Mycoplasma mobile (strain ATCC 43663 / 163K / NCTC 11711) (Mesomycoplasma mobile).